The chain runs to 67 residues: Islet amyloid polypeptide (67 aa).

Residues 1–22 (MCILKLPIVLLVLSVAVNHLQA) form the signal peptide. Residues 23-31 (SPVESHQVE) constitute a propeptide that is removed on maturation. A disulfide bridge connects residues cysteine 35 and cysteine 40.

It belongs to the calcitonin family. As to quaternary structure, can form homodimers. Interacts with IDE and INS. Interaction with INS inhibits homodimerization and fibril formation.

The protein resides in the secreted. In terms of biological role, amylin/IAPP is a glucoregulatory peptide hormone that plays an important role in the regulation of energy homeostasis. Selectively inhibits insulin-stimulated glucose utilization and glycogen deposition in muscle, while not affecting adipocyte glucose metabolism. IAPP function is mediated by the CALCR-RAMPs (AMYRs) receptor complexes. Amylin can also bind CALCR receptor in the absence of RAMPs, although it is more selective for AMYRs. This Oryctolagus cuniculus (Rabbit) protein is Islet amyloid polypeptide (IAPP).